We begin with the raw amino-acid sequence, 122 residues long: Small ribosomal subunit protein uS13 (122 aa).

The tract at residues 95 to 122 is disordered; sequence GLPVRGQRTHTNARTRKGPAKPIAGKKK.

It belongs to the universal ribosomal protein uS13 family. In terms of assembly, part of the 30S ribosomal subunit. Forms a loose heterodimer with protein S19. Forms two bridges to the 50S subunit in the 70S ribosome.

In terms of biological role, located at the top of the head of the 30S subunit, it contacts several helices of the 16S rRNA. In the 70S ribosome it contacts the 23S rRNA (bridge B1a) and protein L5 of the 50S subunit (bridge B1b), connecting the 2 subunits; these bridges are implicated in subunit movement. Contacts the tRNAs in the A and P-sites. The chain is Small ribosomal subunit protein uS13 from Rhodospirillum rubrum (strain ATCC 11170 / ATH 1.1.1 / DSM 467 / LMG 4362 / NCIMB 8255 / S1).